Here is a 477-residue protein sequence, read N- to C-terminus: Glycogen synthase (477 aa).

Lys15 serves as a coordination point for ADP-alpha-D-glucose.

The protein belongs to the glycosyltransferase 1 family. Bacterial/plant glycogen synthase subfamily.

The enzyme catalyses [(1-&gt;4)-alpha-D-glucosyl](n) + ADP-alpha-D-glucose = [(1-&gt;4)-alpha-D-glucosyl](n+1) + ADP + H(+). Its pathway is glycan biosynthesis; glycogen biosynthesis. Synthesizes alpha-1,4-glucan chains using ADP-glucose. In Salmonella arizonae (strain ATCC BAA-731 / CDC346-86 / RSK2980), this protein is Glycogen synthase.